The following is a 445-amino-acid chain: MSVILEHLPTGQKVGIAFSGGLDTSAALHWMKQKGALPYAYTANLGQPDETDYEAIPRKALEYGAEIARLIDCREPLVREGIAALQSGAFHITTAGVTYFNTTPIGRAVTGTMLVTAMKEDDVNIWGDGSTFKGNDIERFYRYGLLVNPDLKVYKPWLDSAFIDELGGRAEMSEFLQKSGFDYKMSAEKAYSTDSNILGATHEAKDLELLSSSIRIVQPIMGVAFWRDDVAVKAEEVTVRFEEGFPVALNGTTYADPVELMLEANRIGGRHGLGMSDQIENRIIEAKSRGIYEAPGMALLFAAYERLITGIHNEDTIEQYHENGRKLGRLLYQGRWFDSQAIMLRESAQRWVARPITGEVTLELRRGNDYSILNTDSPNLTFKPERLTMEKGESTFSPRDRIGQLTMRNLDITDTREKLLTYAKSGLITLSHGSELPKLNSGEKN.

ATP-binding positions include A17–S25 and A43. Position 99 (Y99) interacts with L-citrulline. G129 and T131 together coordinate ATP. L-aspartate is bound by residues T131, N135, and D136. L-citrulline is bound at residue N135. D136 serves as a coordination point for ATP. L-citrulline contacts are provided by R139 and S192. D194 is a binding site for ATP. Positions 201, 203, and 280 each coordinate L-citrulline.

Belongs to the argininosuccinate synthase family. Type 2 subfamily. In terms of assembly, homotetramer.

It is found in the cytoplasm. It carries out the reaction L-citrulline + L-aspartate + ATP = 2-(N(omega)-L-arginino)succinate + AMP + diphosphate + H(+). It functions in the pathway amino-acid biosynthesis; L-arginine biosynthesis; L-arginine from L-ornithine and carbamoyl phosphate: step 2/3. The polypeptide is Argininosuccinate synthase (Acidobacterium capsulatum (strain ATCC 51196 / DSM 11244 / BCRC 80197 / JCM 7670 / NBRC 15755 / NCIMB 13165 / 161)).